The chain runs to 119 residues: Gibberellin-regulated protein 9 (119 aa).

A signal peptide spans 1 to 24 (MKKMNVVAFVTLIISFLLLSQVLA).

Belongs to the GASA family. In terms of processing, six disulfide bonds may be present.

It is found in the secreted. Gibberellin-regulated protein that may function in hormonal controlled steps of development such as seed germination, flowering and seed maturation. The chain is Gibberellin-regulated protein 9 (GASA9) from Arabidopsis thaliana (Mouse-ear cress).